Reading from the N-terminus, the 272-residue chain is S-adenosylmethionine decarboxylase proenzyme (272 aa).

Catalysis depends on Ser-122, which acts as the Schiff-base intermediate with substrate; via pyruvic acid. Ser-122 carries the pyruvic acid (Ser); by autocatalysis modification. The active-site Proton acceptor; for processing activity is His-127. The Proton donor; for catalytic activity role is filled by Cys-150.

The protein belongs to the prokaryotic AdoMetDC family. Type 2 subfamily. In terms of assembly, heterooctamer of four alpha and four beta chains arranged as a tetramer of alpha/beta heterodimers. The cofactor is pyruvate. Is synthesized initially as an inactive proenzyme. Formation of the active enzyme involves a self-maturation process in which the active site pyruvoyl group is generated from an internal serine residue via an autocatalytic post-translational modification. Two non-identical subunits are generated from the proenzyme in this reaction, and the pyruvate is formed at the N-terminus of the alpha chain, which is derived from the carboxyl end of the proenzyme. The post-translation cleavage follows an unusual pathway, termed non-hydrolytic serinolysis, in which the side chain hydroxyl group of the serine supplies its oxygen atom to form the C-terminus of the beta chain, while the remainder of the serine residue undergoes an oxidative deamination to produce ammonia and the pyruvoyl group blocking the N-terminus of the alpha chain.

It carries out the reaction S-adenosyl-L-methionine + H(+) = S-adenosyl 3-(methylsulfanyl)propylamine + CO2. The protein operates within amine and polyamine biosynthesis; S-adenosylmethioninamine biosynthesis; S-adenosylmethioninamine from S-adenosyl-L-methionine: step 1/1. Functionally, catalyzes the decarboxylation of S-adenosylmethionine to S-adenosylmethioninamine (dcAdoMet), the propylamine donor required for the synthesis of the polyamines spermine and spermidine from the diamine putrescine. This chain is S-adenosylmethionine decarboxylase proenzyme, found in Clostridium botulinum (strain Eklund 17B / Type B).